Here is a 303-residue protein sequence, read N- to C-terminus: Sulfate adenylyltransferase subunit 2 (303 aa).

The protein belongs to the PAPS reductase family. CysD subfamily. Heterodimer composed of CysD, the smaller subunit, and CysN.

The catalysed reaction is sulfate + ATP + H(+) = adenosine 5'-phosphosulfate + diphosphate. It functions in the pathway sulfur metabolism; hydrogen sulfide biosynthesis; sulfite from sulfate: step 1/3. Its function is as follows. With CysN forms the ATP sulfurylase (ATPS) that catalyzes the adenylation of sulfate producing adenosine 5'-phosphosulfate (APS) and diphosphate, the first enzymatic step in sulfur assimilation pathway. APS synthesis involves the formation of a high-energy phosphoric-sulfuric acid anhydride bond driven by GTP hydrolysis by CysN coupled to ATP hydrolysis by CysD. The protein is Sulfate adenylyltransferase subunit 2 of Sulfurovum sp. (strain NBC37-1).